The sequence spans 354 residues: Uroporphyrinogen decarboxylase (354 aa).

Residues 27 to 31 (RQAGR), D77, Y154, S209, and H327 each bind substrate.

Belongs to the uroporphyrinogen decarboxylase family. In terms of assembly, homodimer.

It is found in the cytoplasm. The catalysed reaction is uroporphyrinogen III + 4 H(+) = coproporphyrinogen III + 4 CO2. It participates in porphyrin-containing compound metabolism; protoporphyrin-IX biosynthesis; coproporphyrinogen-III from 5-aminolevulinate: step 4/4. Its function is as follows. Catalyzes the decarboxylation of four acetate groups of uroporphyrinogen-III to yield coproporphyrinogen-III. The chain is Uroporphyrinogen decarboxylase from Shewanella frigidimarina (strain NCIMB 400).